A 541-amino-acid polypeptide reads, in one-letter code: GPI alpha-1,2-mannosyltransferase 3 (541 aa).

The N-linked (GlcNAc...) asparagine glycan is linked to Asn-18. The next 9 helical transmembrane spans lie at 53 to 73 (LVLF…TSFV), 126 to 146 (VHLL…IADL), 182 to 202 (LTNT…PLEG), 214 to 234 (LVAL…PLLF), 245 to 265 (DLIL…SLII), 305 to 325 (GFPA…FLAP), 330 to 350 (IFLV…HKEF), 352 to 372 (FIYP…NNLK), and 377 to 397 (PALS…GLVH). N-linked (GlcNAc...) asparagine glycosylation occurs at Asn-417.

It belongs to the glycosyltransferase 22 family. PIGB subfamily.

Its subcellular location is the endoplasmic reticulum membrane. It functions in the pathway glycolipid biosynthesis; glycosylphosphatidylinositol-anchor biosynthesis. Functionally, alpha-1,2-mannosyltransferase that catalyzes the transfer of the third mannose, via an alpha-1,2 bond, from a dolichol-phosphate-mannose (Dol-P-Man) to an alpha-D-Man-(1-&gt;6)-2-PEtn-alpha-D-Man-(1-&gt;4)-alpha-D-GlcN-(1-&gt;6)-(1-radyl,2-acyl-sn-glycero-3-phospho)-2-acyl-inositol intermediate to generate an alpha-D-Man-(1-&gt;2)-alpha-D-Man-(1-&gt;6)-2-PEtn-alpha-D-Man-(1-&gt;4)-alpha-D-GlcN-(1-&gt;6)-(1-radyl,2-acyl-sn-glycero-3-phospho)-2-acyl-inositol (also termed H6) and participates in the nineth step of the glycosylphosphatidylinositol-anchor biosynthesis. May also add the third mannose to an alpha-D-Man-(1-&gt;6)-alpha-D-Man-(1-&gt;4)-alpha-D-GlcN-(1-&gt;6)-(1-radyl,2-acyl-sn-glycero-3-phospho)-2-acyl-inositol (also termed H3) intermediate generating an alpha-D-Man-(1-&gt;2)-alpha-D-Man-(1-&gt;6)-alpha-D-Man-(1-&gt;4)-alpha-D-GlcN-(1-&gt;6)-(1-radyl,2-acyl-sn-glycero-3-phospho)-2-acyl-inositol (also termed H4). This is GPI alpha-1,2-mannosyltransferase 3 from Bos taurus (Bovine).